Reading from the N-terminus, the 422-residue chain is Tyrosine--tRNA ligase (422 aa).

Tyrosine 35 is a binding site for L-tyrosine. The 'HIGH' region signature appears at 40-49; it reads PTAPSLHLGN. Residues tyrosine 170 and glutamine 174 each coordinate L-tyrosine. The short motif at 231–235 is the 'KMSKS' region element; it reads KFGKT. Lysine 234 lines the ATP pocket. The S4 RNA-binding domain occupies 353–419; it reads APVVDLFAEV…GKKNLAAVEV (67 aa).

The protein belongs to the class-I aminoacyl-tRNA synthetase family. TyrS type 1 subfamily. As to quaternary structure, homodimer.

The protein localises to the cytoplasm. It carries out the reaction tRNA(Tyr) + L-tyrosine + ATP = L-tyrosyl-tRNA(Tyr) + AMP + diphosphate + H(+). In terms of biological role, catalyzes the attachment of tyrosine to tRNA(Tyr) in a two-step reaction: tyrosine is first activated by ATP to form Tyr-AMP and then transferred to the acceptor end of tRNA(Tyr). This chain is Tyrosine--tRNA ligase, found in Streptomyces avermitilis (strain ATCC 31267 / DSM 46492 / JCM 5070 / NBRC 14893 / NCIMB 12804 / NRRL 8165 / MA-4680).